Here is a 156-residue protein sequence, read N- to C-terminus: C-type lectin lectoxin-Phi2 (156 aa).

The signal sequence occupies residues 1–23 (MGRFIFVSLGLLVLAFSLSGIGA). 3 cysteine pairs are disulfide-bonded: cysteine 27-cysteine 38, cysteine 55-cysteine 154, and cysteine 129-cysteine 146. One can recognise a C-type lectin domain in the interval 34–155 (HNVSCYKLIN…CNRRHRFLCK (122 aa)). N-linked (GlcNAc...) asparagine glycans are attached at residues asparagine 35 and asparagine 109. The Mannose-binding motif lies at 119–121 (EPN). 3 residues coordinate Ca(2+): glutamate 127, asparagine 142, and aspartate 143.

The protein belongs to the true venom lectin family. As to expression, expressed by the venom gland.

The protein localises to the secreted. In terms of biological role, mannose-binding lectin which recognizes specific carbohydrate structures and agglutinates a variety of animal cells by binding to cell-surface glycoproteins and glycolipids. May be a calcium-dependent lectin. The sequence is that of C-type lectin lectoxin-Phi2 from Philodryas olfersii (Green snake).